Consider the following 509-residue polypeptide: Cytochrome P450 monooxygenase LUC2 (509 aa).

Residues 30–50 traverse the membrane as a helical segment; the sequence is TKVLVTFLTIVIIAPRVFTVI. Residue Cys456 participates in heme binding.

This sequence belongs to the cytochrome P450 family. It depends on heme as a cofactor.

Its subcellular location is the membrane. Its pathway is mycotoxin biosynthesis. Cytochrome P450 monooxygenase; part of the gene cluster that mediates the biosynthesis of the mycotoxin lucilactaene and the lucilactaene-related compound NG-391 that act as cell cycle inhibitors with potent growth inhibitory activity against malarial parasites, moderate growth inhibitory activity against cancer cells, and no activity against bacteria and fungi. Within the pathway, LUC2 performs C-20 methyl group hydroxylation of several intermediates. LUC2 does not perform the full oxidation of the C-20 methyl group into carboxylic acid, which is a prerequisite for the final methylation step. The pathway begins with the hybrid PKS-NRPS synthetase LUC5 which is responsible for the condensation of one acetyl-coenzyme A (CoA) unit with six malonyl-CoA units and the amide linkage of the arising heptaketide and homoserine, subsequently releasing the first intermediate prelucilactaene B. Both the cytochrome P450 monooxygenase LUC2 and the hydrolase LUC6 function in parallel in modification of prelucilactaene B. LUC6 may catalyze the 2-pyrrolidone ring formation to form prelucilactaene C from prelucilactaene B, followed by C-15 hydroxylation by the same enzyme to give prelucilactaene D, which is then converted to prelucilactaene E by epoxidation, and finally to prelucilactaene F by cyclization. Prelucilactane D, prelucilactaene E, and prelucilactaene F can be converted to dihydrolucilactaene, NG391, and lucilactaene, respectively, via C-20 methyl group hydroxylation by the cytochrome P450 monooxygenase LUC2. However, LUC2, unlike FUS8 in fusarin C biosynthesis, is not enough for the full oxidation of the C-20 methyl group into carboxylic acid, which is a prerequisite for the final methylation step. The aldehyde dehydrogenase LUC3 is involved in the biosynthesis by further oxidation of the C-20 alcoholic analog prelucilactaene G into a carboxylic derivative. This unidentified carboxylic derivative may be converted to demethyllucilactaene. As the last step, the methyltransferase LUC1 methylates the hydroxyl group at C-21 of demethyllucilactaene to generate lucilactaene. This chain is Cytochrome P450 monooxygenase LUC2, found in Fusarium sp.